The sequence spans 272 residues: Petrobactin import ATP-binding protein FpuC (272 aa).

In terms of domain architecture, ABC transporter spans 2–238 (ISVNKVFYAH…EMFQHIFGIE (237 aa)). ATP is bound at residue 34–41 (GPNGSGKS).

The protein belongs to the ABC transporter superfamily. In terms of assembly, the complex is composed of two ATP-binding proteins (FpuC), two transmembrane proteins (FpuB) and a solute-binding protein (FpuA).

The protein localises to the cell membrane. The enzyme catalyses a Fe(III)-siderophore(out) + ATP + H2O = a Fe(III)-siderophore(in) + ADP + phosphate + H(+). In terms of biological role, part of an ABC transporter complex involved in ferric-petrobactin uptake. Probably responsible for energy coupling to the transport system. The protein is Petrobactin import ATP-binding protein FpuC of Bacillus anthracis.